The sequence spans 345 residues: Probable galacturonosyltransferase-like 3 (345 aa).

The Cytoplasmic segment spans residues 1–7 (MSSLRLR). A helical; Signal-anchor for type II membrane protein membrane pass occupies residues 8–28 (LCLLLLLPITISCVTVTLTDL). Topologically, residues 29–345 (PAFREAPAFR…FRYSPLISDS (317 aa)) are lumenal. The N-linked (GlcNAc...) asparagine glycan is linked to Asn-197.

This sequence belongs to the glycosyltransferase 8 family.

The protein resides in the golgi apparatus membrane. Its pathway is glycan metabolism; pectin biosynthesis. Its function is as follows. May be involved in pectin and/or xylans biosynthesis in cell walls. The chain is Probable galacturonosyltransferase-like 3 (GATL3) from Arabidopsis thaliana (Mouse-ear cress).